The sequence spans 266 residues: GTP cyclohydrolase III (266 aa).

It belongs to the archaeal-type GTP cyclohydrolase family.

The catalysed reaction is GTP + 3 H2O = 2-amino-5-formylamino-6-(5-phospho-D-ribosylamino)pyrimidin-4(3H)-one + 2 phosphate + 2 H(+). In terms of biological role, catalyzes the formation of 2-amino-5-formylamino-6-ribofuranosylamino-4(3H)-pyrimidinone ribonucleotide monophosphate and inorganic phosphate from GTP. Also has an independent pyrophosphate phosphohydrolase activity. In Methanococcus maripaludis (strain DSM 14266 / JCM 13030 / NBRC 101832 / S2 / LL), this protein is GTP cyclohydrolase III.